A 360-amino-acid polypeptide reads, in one-letter code: Phospho-N-acetylmuramoyl-pentapeptide-transferase (360 aa).

10 helical membrane-spanning segments follow: residues 27 to 47, 71 to 91, 93 to 113, 134 to 154, 168 to 188, 199 to 219, 239 to 259, 262 to 282, 288 to 308, and 337 to 357; these read GAFM…INVL, TPTM…LLWA, WDNP…LIGF, LALG…NHPA, TLIN…VGSA, GLAI…AYAV, ILIF…YNAP, AVFM…AIAV, LVLA…IIQV, and TIVI…LATL.

This sequence belongs to the glycosyltransferase 4 family. MraY subfamily. Mg(2+) is required as a cofactor.

It is found in the cell inner membrane. The catalysed reaction is UDP-N-acetyl-alpha-D-muramoyl-L-alanyl-gamma-D-glutamyl-meso-2,6-diaminopimeloyl-D-alanyl-D-alanine + di-trans,octa-cis-undecaprenyl phosphate = di-trans,octa-cis-undecaprenyl diphospho-N-acetyl-alpha-D-muramoyl-L-alanyl-D-glutamyl-meso-2,6-diaminopimeloyl-D-alanyl-D-alanine + UMP. It functions in the pathway cell wall biogenesis; peptidoglycan biosynthesis. Its function is as follows. Catalyzes the initial step of the lipid cycle reactions in the biosynthesis of the cell wall peptidoglycan: transfers peptidoglycan precursor phospho-MurNAc-pentapeptide from UDP-MurNAc-pentapeptide onto the lipid carrier undecaprenyl phosphate, yielding undecaprenyl-pyrophosphoryl-MurNAc-pentapeptide, known as lipid I. The chain is Phospho-N-acetylmuramoyl-pentapeptide-transferase from Ruegeria pomeroyi (strain ATCC 700808 / DSM 15171 / DSS-3) (Silicibacter pomeroyi).